The primary structure comprises 111 residues: Iron-sulfur cluster assembly protein CyaY (111 aa).

The protein belongs to the frataxin family.

Its function is as follows. Involved in iron-sulfur (Fe-S) cluster assembly. May act as a regulator of Fe-S biogenesis. The polypeptide is Iron-sulfur cluster assembly protein CyaY (Cupriavidus necator (strain ATCC 17699 / DSM 428 / KCTC 22496 / NCIMB 10442 / H16 / Stanier 337) (Ralstonia eutropha)).